The sequence spans 156 residues: 6,7-dimethyl-8-ribityllumazine synthase (156 aa).

5-amino-6-(D-ribitylamino)uracil contacts are provided by residues phenylalanine 25, 59 to 61 (AWE), and 83 to 85 (AVI). 88 to 89 (ST) is a (2S)-2-hydroxy-3-oxobutyl phosphate binding site. Catalysis depends on histidine 91, which acts as the Proton donor. 5-amino-6-(D-ribitylamino)uracil is bound at residue asparagine 116. Residue arginine 130 coordinates (2S)-2-hydroxy-3-oxobutyl phosphate.

Belongs to the DMRL synthase family. Forms an icosahedral capsid composed of 60 subunits, arranged as a dodecamer of pentamers.

It catalyses the reaction (2S)-2-hydroxy-3-oxobutyl phosphate + 5-amino-6-(D-ribitylamino)uracil = 6,7-dimethyl-8-(1-D-ribityl)lumazine + phosphate + 2 H2O + H(+). Its pathway is cofactor biosynthesis; riboflavin biosynthesis; riboflavin from 2-hydroxy-3-oxobutyl phosphate and 5-amino-6-(D-ribitylamino)uracil: step 1/2. Catalyzes the formation of 6,7-dimethyl-8-ribityllumazine by condensation of 5-amino-6-(D-ribitylamino)uracil with 3,4-dihydroxy-2-butanone 4-phosphate. This is the penultimate step in the biosynthesis of riboflavin. This Acinetobacter baumannii (strain AB0057) protein is 6,7-dimethyl-8-ribityllumazine synthase.